The sequence spans 426 residues: D-tagatose-1,6-bisphosphate aldolase subunit KbaZ (426 aa).

This sequence belongs to the GatZ/KbaZ family. KbaZ subfamily. In terms of assembly, forms a complex with KbaY.

Its pathway is carbohydrate metabolism; D-tagatose 6-phosphate degradation; D-glyceraldehyde 3-phosphate and glycerone phosphate from D-tagatose 6-phosphate: step 2/2. In terms of biological role, component of the tagatose-1,6-bisphosphate aldolase KbaYZ that is required for full activity and stability of the Y subunit. Could have a chaperone-like function for the proper and stable folding of KbaY. When expressed alone, KbaZ does not show any aldolase activity. The chain is D-tagatose-1,6-bisphosphate aldolase subunit KbaZ from Escherichia fergusonii (strain ATCC 35469 / DSM 13698 / CCUG 18766 / IAM 14443 / JCM 21226 / LMG 7866 / NBRC 102419 / NCTC 12128 / CDC 0568-73).